A 269-amino-acid polypeptide reads, in one-letter code: Tryptophan synthase alpha chain (269 aa).

Catalysis depends on proton acceptor residues Glu-49 and Asp-60.

The protein belongs to the TrpA family. In terms of assembly, tetramer of two alpha and two beta chains.

It carries out the reaction (1S,2R)-1-C-(indol-3-yl)glycerol 3-phosphate + L-serine = D-glyceraldehyde 3-phosphate + L-tryptophan + H2O. It functions in the pathway amino-acid biosynthesis; L-tryptophan biosynthesis; L-tryptophan from chorismate: step 5/5. The alpha subunit is responsible for the aldol cleavage of indoleglycerol phosphate to indole and glyceraldehyde 3-phosphate. The sequence is that of Tryptophan synthase alpha chain from Paramagnetospirillum magneticum (strain ATCC 700264 / AMB-1) (Magnetospirillum magneticum).